The sequence spans 446 residues: Bifunctional protein GlmU (446 aa).

Positions 1 to 226 are pyrophosphorylase; that stretch reads MLAVAILAAG…PDEVNGINDR (226 aa). UDP-N-acetyl-alpha-D-glucosamine contacts are provided by residues 7–10, Lys-21, Gln-73, and 78–79; these read LAAG and GT. Position 103 (Asp-103) interacts with Mg(2+). Gly-140, Glu-155, Asn-170, and Asn-224 together coordinate UDP-N-acetyl-alpha-D-glucosamine. Mg(2+) is bound at residue Asn-224. The linker stretch occupies residues 227–247; it reads CQLANCEALLQERLRNYWMKE. The N-acetyltransferase stretch occupies residues 248-446; it reads GVTFTDPASC…SKQLIKNGWQ (199 aa). Residues Arg-329 and Lys-347 each contribute to the UDP-N-acetyl-alpha-D-glucosamine site. His-359 serves as the catalytic Proton acceptor. UDP-N-acetyl-alpha-D-glucosamine contacts are provided by Tyr-362 and Asn-373. Acetyl-CoA is bound by residues Ala-376, 382 to 383, Ala-419, and Arg-436; that span reads NY.

This sequence in the N-terminal section; belongs to the N-acetylglucosamine-1-phosphate uridyltransferase family. In the C-terminal section; belongs to the transferase hexapeptide repeat family. In terms of assembly, homotrimer. Requires Mg(2+) as cofactor.

The protein localises to the cytoplasm. It carries out the reaction alpha-D-glucosamine 1-phosphate + acetyl-CoA = N-acetyl-alpha-D-glucosamine 1-phosphate + CoA + H(+). It catalyses the reaction N-acetyl-alpha-D-glucosamine 1-phosphate + UTP + H(+) = UDP-N-acetyl-alpha-D-glucosamine + diphosphate. It participates in nucleotide-sugar biosynthesis; UDP-N-acetyl-alpha-D-glucosamine biosynthesis; N-acetyl-alpha-D-glucosamine 1-phosphate from alpha-D-glucosamine 6-phosphate (route II): step 2/2. The protein operates within nucleotide-sugar biosynthesis; UDP-N-acetyl-alpha-D-glucosamine biosynthesis; UDP-N-acetyl-alpha-D-glucosamine from N-acetyl-alpha-D-glucosamine 1-phosphate: step 1/1. It functions in the pathway bacterial outer membrane biogenesis; LPS lipid A biosynthesis. Catalyzes the last two sequential reactions in the de novo biosynthetic pathway for UDP-N-acetylglucosamine (UDP-GlcNAc). The C-terminal domain catalyzes the transfer of acetyl group from acetyl coenzyme A to glucosamine-1-phosphate (GlcN-1-P) to produce N-acetylglucosamine-1-phosphate (GlcNAc-1-P), which is converted into UDP-GlcNAc by the transfer of uridine 5-monophosphate (from uridine 5-triphosphate), a reaction catalyzed by the N-terminal domain. This chain is Bifunctional protein GlmU, found in Prochlorococcus marinus (strain MIT 9313).